The sequence spans 311 residues: Forkhead box protein R2 (311 aa).

Disordered regions lie at residues 56 to 76 (PPEMPQKRRPSPDGDGPPCEP) and 90 to 171 (LGSQ…QSPE). The span at 115–128 (QKDEGSNCSEDKVV) shows a compositional bias: basic and acidic residues. The segment covering 129 to 143 (ESLPSSSSEQSPLQK) has biased composition (low complexity). A compositionally biased stretch (acidic residues) spans 153–164 (ELTEEEAEEPDD). A DNA-binding region (fork-head) is located at residues 192-294 (RPPLNCSHLI…RVLAFAQRER (103 aa)).

As to expression, expressed in breast cancer cell lines and primary cancer.

It is found in the nucleus. This chain is Forkhead box protein R2 (FOXR2), found in Homo sapiens (Human).